The chain runs to 645 residues: tRNA 5-methylaminomethyl-2-thiouridine biosynthesis bifunctional protein MnmC (645 aa).

A tRNA (mnm(5)s(2)U34)-methyltransferase region spans residues 1–230 (MPMSEPIDWL…KRHNLHAVFD (230 aa)). The interval 254-645 (LGAGIAGAAA…LASERLGRRR (392 aa)) is FAD-dependent cmnm(5)s(2)U34 oxidoreductase.

It in the N-terminal section; belongs to the methyltransferase superfamily. tRNA (mnm(5)s(2)U34)-methyltransferase family. In the C-terminal section; belongs to the DAO family. It depends on FAD as a cofactor.

It is found in the cytoplasm. It carries out the reaction 5-aminomethyl-2-thiouridine(34) in tRNA + S-adenosyl-L-methionine = 5-methylaminomethyl-2-thiouridine(34) in tRNA + S-adenosyl-L-homocysteine + H(+). In terms of biological role, catalyzes the last two steps in the biosynthesis of 5-methylaminomethyl-2-thiouridine (mnm(5)s(2)U) at the wobble position (U34) in tRNA. Catalyzes the FAD-dependent demodification of cmnm(5)s(2)U34 to nm(5)s(2)U34, followed by the transfer of a methyl group from S-adenosyl-L-methionine to nm(5)s(2)U34, to form mnm(5)s(2)U34. This is tRNA 5-methylaminomethyl-2-thiouridine biosynthesis bifunctional protein MnmC from Delftia acidovorans (strain DSM 14801 / SPH-1).